The sequence spans 435 residues: Diaminobutyrate--2-oxoglutarate transaminase (435 aa).

Lysine 266 is subject to N6-(pyridoxal phosphate)lysine.

Belongs to the class-III pyridoxal-phosphate-dependent aminotransferase family. Pyridoxal 5'-phosphate serves as cofactor.

It carries out the reaction L-2,4-diaminobutanoate + 2-oxoglutarate = L-aspartate 4-semialdehyde + L-glutamate. Its pathway is amine and polyamine biosynthesis; ectoine biosynthesis; L-ectoine from L-aspartate 4-semialdehyde: step 1/3. Its function is as follows. Catalyzes reversively the conversion of L-aspartate beta-semialdehyde (ASA) to L-2,4-diaminobutyrate (DABA) by transamination with L-glutamate. In Bordetella bronchiseptica (strain ATCC BAA-588 / NCTC 13252 / RB50) (Alcaligenes bronchisepticus), this protein is Diaminobutyrate--2-oxoglutarate transaminase (ectB).